A 284-amino-acid chain; its full sequence is Tryptophan 2,3-dioxygenase (284 aa).

Residues F53–H57, Y115, and R119 each bind substrate. H242 provides a ligand contact to heme. A substrate-binding site is contributed by T256.

This sequence belongs to the tryptophan 2,3-dioxygenase family. Homotetramer. Heme is required as a cofactor.

It carries out the reaction L-tryptophan + O2 = N-formyl-L-kynurenine. It functions in the pathway amino-acid degradation; L-tryptophan degradation via kynurenine pathway; L-kynurenine from L-tryptophan: step 1/2. Heme-dependent dioxygenase that catalyzes the oxidative cleavage of the L-tryptophan (L-Trp) pyrrole ring and converts L-tryptophan to N-formyl-L-kynurenine. Catalyzes the oxidative cleavage of the indole moiety. The chain is Tryptophan 2,3-dioxygenase from Bordetella parapertussis (strain 12822 / ATCC BAA-587 / NCTC 13253).